Here is a 177-residue protein sequence, read N- to C-terminus: NADH-quinone oxidoreductase subunit B (177 aa).

The [4Fe-4S] cluster site is built by C56, C57, C121, and C151.

The protein belongs to the complex I 20 kDa subunit family. As to quaternary structure, NDH-1 is composed of 14 different subunits. Subunits NuoB, C, D, E, F, and G constitute the peripheral sector of the complex. It depends on [4Fe-4S] cluster as a cofactor.

It localises to the cell inner membrane. The enzyme catalyses a quinone + NADH + 5 H(+)(in) = a quinol + NAD(+) + 4 H(+)(out). In terms of biological role, NDH-1 shuttles electrons from NADH, via FMN and iron-sulfur (Fe-S) centers, to quinones in the respiratory chain. Couples the redox reaction to proton translocation (for every two electrons transferred, four hydrogen ions are translocated across the cytoplasmic membrane), and thus conserves the redox energy in a proton gradient. In Jannaschia sp. (strain CCS1), this protein is NADH-quinone oxidoreductase subunit B.